The following is a 423-amino-acid chain: Sulfate adenylyltransferase (423 aa).

It belongs to the sulfate adenylyltransferase family.

It catalyses the reaction sulfate + ATP + H(+) = adenosine 5'-phosphosulfate + diphosphate. The protein operates within sulfur metabolism; hydrogen sulfide biosynthesis; sulfite from sulfate: step 1/3. The polypeptide is Sulfate adenylyltransferase (Desulfovibrio desulfuricans (strain ATCC 27774 / DSM 6949 / MB)).